The following is a 344-amino-acid chain: Holliday junction branch migration complex subunit RuvB (344 aa).

Residues 4 to 184 form a large ATPase domain (RuvB-L) region; that stretch reads QDRIIDANAK…FGIVQRLEFY (181 aa). ATP is bound by residues R24, G65, K68, T69, T70, 131 to 133, R174, Y184, and R221; that span reads EDF. T69 serves as a coordination point for Mg(2+). Residues 185–255 form a small ATPAse domain (RuvB-S) region; it reads NIEDLTHIVE…IADLALNMLN (71 aa). The segment at 258 to 344 is head domain (RuvB-H); that stretch reads EHGFDHMDRR…ALKQDSLPGI (87 aa). DNA-binding residues include R294, R313, and R318.

The protein belongs to the RuvB family. In terms of assembly, homohexamer. Forms an RuvA(8)-RuvB(12)-Holliday junction (HJ) complex. HJ DNA is sandwiched between 2 RuvA tetramers; dsDNA enters through RuvA and exits via RuvB. An RuvB hexamer assembles on each DNA strand where it exits the tetramer. Each RuvB hexamer is contacted by two RuvA subunits (via domain III) on 2 adjacent RuvB subunits; this complex drives branch migration. In the full resolvosome a probable DNA-RuvA(4)-RuvB(12)-RuvC(2) complex forms which resolves the HJ.

It localises to the cytoplasm. The enzyme catalyses ATP + H2O = ADP + phosphate + H(+). In terms of biological role, the RuvA-RuvB-RuvC complex processes Holliday junction (HJ) DNA during genetic recombination and DNA repair, while the RuvA-RuvB complex plays an important role in the rescue of blocked DNA replication forks via replication fork reversal (RFR). RuvA specifically binds to HJ cruciform DNA, conferring on it an open structure. The RuvB hexamer acts as an ATP-dependent pump, pulling dsDNA into and through the RuvAB complex. RuvB forms 2 homohexamers on either side of HJ DNA bound by 1 or 2 RuvA tetramers; 4 subunits per hexamer contact DNA at a time. Coordinated motions by a converter formed by DNA-disengaged RuvB subunits stimulates ATP hydrolysis and nucleotide exchange. Immobilization of the converter enables RuvB to convert the ATP-contained energy into a lever motion, pulling 2 nucleotides of DNA out of the RuvA tetramer per ATP hydrolyzed, thus driving DNA branch migration. The RuvB motors rotate together with the DNA substrate, which together with the progressing nucleotide cycle form the mechanistic basis for DNA recombination by continuous HJ branch migration. Branch migration allows RuvC to scan DNA until it finds its consensus sequence, where it cleaves and resolves cruciform DNA. This Saccharophagus degradans (strain 2-40 / ATCC 43961 / DSM 17024) protein is Holliday junction branch migration complex subunit RuvB.